The sequence spans 207 residues: Large ribosomal subunit protein bL9 (207 aa).

The segment covering 162–176 has biased composition (basic and acidic residues); that stretch reads QKKEEKAKDEVSATE. The tract at residues 162–207 is disordered; it reads QKKEEKAKDEVSATEKDEELMLSSVTNDNDGDGAKEIVVEGTEESQ.

The protein belongs to the bacterial ribosomal protein bL9 family.

Binds to the 23S rRNA. In Ehrlichia ruminantium (strain Gardel), this protein is Large ribosomal subunit protein bL9.